A 131-amino-acid chain; its full sequence is Glycine cleavage system H protein (131 aa).

Residues 24-106 (VYCVGITEHA…YTDGWLFKIK (83 aa)) enclose the Lipoyl-binding domain. N6-lipoyllysine is present on Lys65.

This sequence belongs to the GcvH family. As to quaternary structure, the glycine cleavage system is composed of four proteins: P, T, L and H. It depends on (R)-lipoate as a cofactor.

In terms of biological role, the glycine cleavage system catalyzes the degradation of glycine. The H protein shuttles the methylamine group of glycine from the P protein to the T protein. The sequence is that of Glycine cleavage system H protein from Sodalis glossinidius (strain morsitans).